Consider the following 526-residue polypeptide: MSGNKVEVDKRRTFAIISHPDAGKTTITEKVLLFGNALQKAGTVKGKKSGQHAKSDWMEMEKDRGISITTSVMQFPYGGALVNLLDTPGHEDFSEDTYRTLTAVDSCLMVIDSAKGVEERTIKLMEVTRLRDTPIVTFMNKLDRDIRDPIDLMDEVESVLNIACAPITWPIGSGKEFKGIYHILRDEVVLYQGGMGHTIQERRVIKGINNPDLEKAIGSYAADLRDEMELVRGASHEFDHAAFLKGELTPVFFGTALGNFGVDHILDGIVEWAPKPLPRESDTRVIMPDEEKFTGFVFKIQANMDPKHRDRVAFMRVCSGRYEQGMKMHHVRIGKDVNVSDALTFMAGDRERAEEAYPGDIIGLHNHGTIRIGDTFTQGEKFRFTGVPNFAPEMFRRIRLRDPLKQKQLLKGLVQLSEEGAVQVFRPIDTNDLIVGAVGVLQFEVVVGRLKSEYNVEAIYEGISVSTARWVYCKDERKLEEFRRKCSQNLALDGGDNLTYIAPTMVNLNLSMERYPDIEFAKTREH.

Residues 9–277 (DKRRTFAIIS…GIVEWAPKPL (269 aa)) enclose the tr-type G domain. Residues 18-25 (SHPDAGKT), 86-90 (DTPGH), and 140-143 (NKLD) each bind GTP.

This sequence belongs to the TRAFAC class translation factor GTPase superfamily. Classic translation factor GTPase family. PrfC subfamily.

The protein localises to the cytoplasm. Increases the formation of ribosomal termination complexes and stimulates activities of RF-1 and RF-2. It binds guanine nucleotides and has strong preference for UGA stop codons. It may interact directly with the ribosome. The stimulation of RF-1 and RF-2 is significantly reduced by GTP and GDP, but not by GMP. This chain is Peptide chain release factor 3, found in Shewanella baltica (strain OS155 / ATCC BAA-1091).